The chain runs to 143 residues: Small ribosomal subunit protein uS12 (143 aa).

Residues Met-1–Gln-20 are compositionally biased toward basic residues. The interval Met-1–Asp-26 is disordered. The residue at position 62 (Pro-62) is a Hydroxyproline.

This sequence belongs to the universal ribosomal protein uS12 family. In terms of assembly, component of the 40S small ribosomal subunit.

The protein resides in the cytoplasm. The protein localises to the cytosol. It is found in the rough endoplasmic reticulum. In Dermacentor variabilis (American dog tick), this protein is Small ribosomal subunit protein uS12 (RpS23).